A 309-amino-acid chain; its full sequence is Oxygen-dependent coproporphyrinogen-III oxidase (309 aa).

Substrate is bound at residue Ser-100. 2 residues coordinate a divalent metal cation: His-104 and His-114. Catalysis depends on His-114, which acts as the Proton donor. 116-118 (NVR) contributes to the substrate binding site. A divalent metal cation contacts are provided by His-153 and His-183. The important for dimerization stretch occupies residues 248–283 (YAEFNLVYDRGTLFGLQSGGRTESILMSLPPIVHWE). 266–268 (GGR) lines the substrate pocket.

This sequence belongs to the aerobic coproporphyrinogen-III oxidase family. Homodimer. A divalent metal cation is required as a cofactor.

The protein localises to the cytoplasm. It carries out the reaction coproporphyrinogen III + O2 + 2 H(+) = protoporphyrinogen IX + 2 CO2 + 2 H2O. The protein operates within porphyrin-containing compound metabolism; protoporphyrin-IX biosynthesis; protoporphyrinogen-IX from coproporphyrinogen-III (O2 route): step 1/1. In terms of biological role, involved in the heme biosynthesis. Catalyzes the aerobic oxidative decarboxylation of propionate groups of rings A and B of coproporphyrinogen-III to yield the vinyl groups in protoporphyrinogen-IX. This chain is Oxygen-dependent coproporphyrinogen-III oxidase, found in Legionella pneumophila (strain Lens).